Consider the following 391-residue polypeptide: Ferrochelatase (391 aa).

Fe cation-binding residues include histidine 196 and glutamate 281.

Belongs to the ferrochelatase family.

The protein resides in the cytoplasm. It carries out the reaction heme b + 2 H(+) = protoporphyrin IX + Fe(2+). It participates in porphyrin-containing compound metabolism; protoheme biosynthesis; protoheme from protoporphyrin-IX: step 1/1. Catalyzes the ferrous insertion into protoporphyrin IX. The chain is Ferrochelatase from Prochlorococcus marinus (strain MIT 9312).